The following is a 311-amino-acid chain: 5'-adenylylsulfate reductase-like 3 (311 aa).

The N-terminal stretch at 1–22 (MATRLLCWTALLLPIIAATAAA) is a signal peptide. Residues 23–164 (SPLPEACPVP…LAAFYRDVSG (142 aa)) form the Thioredoxin domain. Asn-139 is a glycosylation site (N-linked (GlcNAc...) asparagine). The chain crosses the membrane as a helical span at residues 210-230 (LALATAFVILRLLYLLFPKIG). Asn-281 and Asn-305 each carry an N-linked (GlcNAc...) asparagine glycan.

The protein localises to the membrane. The sequence is that of 5'-adenylylsulfate reductase-like 3 (APRL3) from Oryza sativa subsp. japonica (Rice).